The chain runs to 140 residues: uncharacterized protein (140 aa).

2 helical membrane passes run 33 to 53 and 59 to 79; these read LLYVFLFIIFANCVVDVKYYF and SLLFVYFFLTLIILLVSFMGF. Residues 89–104 are compositionally biased toward basic and acidic residues; that stretch reads EAEPDYRKKQESKNQD. The tract at residues 89 to 140 is disordered; it reads EAEPDYRKKQESKNQDFLKSQSNEPLEYASSSAVELEKEKNTREGLTILESS. Polar residues predominate over residues 105–121; that stretch reads FLKSQSNEPLEYASSSA.

The protein resides in the membrane. This is an uncharacterized protein from Schizosaccharomyces pombe (strain 972 / ATCC 24843) (Fission yeast).